A 407-amino-acid polypeptide reads, in one-letter code: Phosphoglycerate kinase (407 aa).

Substrate-binding positions include 24-26 (DFN), arginine 40, 63-66 (HLGR), arginine 121, and arginine 154. ATP contacts are provided by residues lysine 205, glutamate 337, and 363 to 366 (GGDS).

Belongs to the phosphoglycerate kinase family. In terms of assembly, monomer.

The protein localises to the cytoplasm. It carries out the reaction (2R)-3-phosphoglycerate + ATP = (2R)-3-phospho-glyceroyl phosphate + ADP. It participates in carbohydrate degradation; glycolysis; pyruvate from D-glyceraldehyde 3-phosphate: step 2/5. In Gloeobacter violaceus (strain ATCC 29082 / PCC 7421), this protein is Phosphoglycerate kinase.